The following is a 115-amino-acid chain: Large ribosomal subunit protein bL19 (115 aa).

It belongs to the bacterial ribosomal protein bL19 family.

Functionally, this protein is located at the 30S-50S ribosomal subunit interface and may play a role in the structure and function of the aminoacyl-tRNA binding site. This chain is Large ribosomal subunit protein bL19, found in Escherichia coli O139:H28 (strain E24377A / ETEC).